The following is a 351-amino-acid chain: Dihydroorotate dehydrogenase (quinone) (351 aa).

FMN-binding positions include 67 to 71 (AGFDK) and threonine 91. Lysine 71 contacts substrate. Position 116–120 (116–120 (NAMGF)) interacts with substrate. FMN is bound by residues asparagine 145 and asparagine 178. Asparagine 178 contacts substrate. The active-site Nucleophile is serine 181. Asparagine 183 lines the substrate pocket. Residues lysine 214 and threonine 242 each contribute to the FMN site. 243–244 (NT) provides a ligand contact to substrate. Residues glycine 262, glycine 291, and 312-313 (YS) contribute to the FMN site.

It belongs to the dihydroorotate dehydrogenase family. Type 2 subfamily. In terms of assembly, monomer. FMN is required as a cofactor.

Its subcellular location is the cell membrane. It carries out the reaction (S)-dihydroorotate + a quinone = orotate + a quinol. It participates in pyrimidine metabolism; UMP biosynthesis via de novo pathway; orotate from (S)-dihydroorotate (quinone route): step 1/1. Its function is as follows. Catalyzes the conversion of dihydroorotate to orotate with quinone as electron acceptor. The chain is Dihydroorotate dehydrogenase (quinone) (pyrD) from Helicobacter pylori (strain J99 / ATCC 700824) (Campylobacter pylori J99).